Consider the following 752-residue polypeptide: Double zinc ribbon and ankyrin repeat-containing protein 1 (752 aa).

Phosphoserine is present on residues Ser160 and Ser182. The segment at 164 to 187 (IPAYGGGSGSRPPTRQSQSPGFAH) is disordered. Polar residues predominate over residues 174–183 (RPPTRQSQSP). 2 consecutive DZANK-type zinc fingers follow at residues 211–270 (CAHC…CVVC) and 339–387 (CYRC…GSCG). ANK repeat units lie at residues 605 to 636 (ENRLLLKEVGPTGEGRVSVIEQLLDEGADPNC) and 640 to 669 (DNRPVITVAVMNKHHEAIPVLVQRGADIDQ).

As to quaternary structure, interacts with NINL isoform 2. Associates with DYNC1H1 and multiple dynein intermediate and light chains as well as actin-binding proteins.

It is found in the cytoplasm. It localises to the cytoskeleton. The protein localises to the microtubule organizing center. Its subcellular location is the centrosome. The protein resides in the cilium basal body. Involved in vesicle transport in photoreceptor cells. This is Double zinc ribbon and ankyrin repeat-containing protein 1 from Homo sapiens (Human).